The chain runs to 298 residues: Ethanolamine ammonia-lyase small subunit (298 aa).

Adenosylcob(III)alamin contacts are provided by valine 210, glutamate 231, and cysteine 261.

Belongs to the EutC family. As to quaternary structure, the basic unit is a heterodimer which dimerizes to form tetramers. The heterotetramers trimerize; 6 large subunits form a core ring with 6 small subunits projecting outwards. Adenosylcob(III)alamin serves as cofactor.

The protein localises to the bacterial microcompartment. The enzyme catalyses ethanolamine = acetaldehyde + NH4(+). It participates in amine and polyamine degradation; ethanolamine degradation. Its function is as follows. Catalyzes the deamination of various vicinal amino-alcohols to oxo compounds. Allows this organism to utilize ethanolamine as the sole source of nitrogen and carbon in the presence of external vitamin B12. This Salmonella agona (strain SL483) protein is Ethanolamine ammonia-lyase small subunit.